The primary structure comprises 391 residues: Probable tRNA sulfurtransferase (391 aa).

Residues 60 to 167 form the THUMP domain; it reads DETVAALQRV…NKAYVYSNTL (108 aa). Residues 184-185, 209-210, arginine 266, glycine 288, and glutamine 297 contribute to the ATP site; these read LL and YF.

Belongs to the ThiI family.

Its subcellular location is the cytoplasm. The catalysed reaction is [ThiI sulfur-carrier protein]-S-sulfanyl-L-cysteine + a uridine in tRNA + 2 reduced [2Fe-2S]-[ferredoxin] + ATP + H(+) = [ThiI sulfur-carrier protein]-L-cysteine + a 4-thiouridine in tRNA + 2 oxidized [2Fe-2S]-[ferredoxin] + AMP + diphosphate. It carries out the reaction [ThiS sulfur-carrier protein]-C-terminal Gly-Gly-AMP + S-sulfanyl-L-cysteinyl-[cysteine desulfurase] + AH2 = [ThiS sulfur-carrier protein]-C-terminal-Gly-aminoethanethioate + L-cysteinyl-[cysteine desulfurase] + A + AMP + 2 H(+). The protein operates within cofactor biosynthesis; thiamine diphosphate biosynthesis. In terms of biological role, catalyzes the ATP-dependent transfer of a sulfur to tRNA to produce 4-thiouridine in position 8 of tRNAs, which functions as a near-UV photosensor. Also catalyzes the transfer of sulfur to the sulfur carrier protein ThiS, forming ThiS-thiocarboxylate. This is a step in the synthesis of thiazole, in the thiamine biosynthesis pathway. The sulfur is donated as persulfide by IscS. In Lachnoclostridium phytofermentans (strain ATCC 700394 / DSM 18823 / ISDg) (Clostridium phytofermentans), this protein is Probable tRNA sulfurtransferase.